The primary structure comprises 363 residues: S-methylmethionine--homocysteine S-methyltransferase BHMT2 (363 aa).

A Hcy-binding domain is found at Arg11–Leu305. Positions 208, 290, and 291 each coordinate Zn(2+). Position 321 is a phosphoserine (Ser321).

Homotetramer. Zn(2+) serves as cofactor.

It catalyses the reaction S-methyl-L-methionine + L-homocysteine = 2 L-methionine + H(+). The protein operates within amino-acid biosynthesis; L-methionine biosynthesis via de novo pathway; L-methionine from L-homocysteine (BhmT route): step 1/1. Functionally, involved in the regulation of homocysteine metabolism. Converts betaine and homocysteine to dimethylglycine and methionine, respectively. This reaction is also required for the irreversible oxidation of choline. This chain is S-methylmethionine--homocysteine S-methyltransferase BHMT2 (BHMT2), found in Pongo abelii (Sumatran orangutan).